The chain runs to 515 residues: Aldehyde dehydrogenase (515 aa).

Residues 1-12 (MTVAEQQPQHQG) show a composition bias toward polar residues. The tract at residues 1 to 20 (MTVAEQQPQHQGYANPGTPG) is disordered. 228–234 (GFGLEAG) provides a ligand contact to NAD(+). Residues Glu-272 and Cys-311 contribute to the active site.

The protein belongs to the aldehyde dehydrogenase family.

The enzyme catalyses an aldehyde + NAD(+) + H2O = a carboxylate + NADH + 2 H(+). The protein is Aldehyde dehydrogenase (aldA) of Deinococcus radiodurans (strain ATCC 13939 / DSM 20539 / JCM 16871 / CCUG 27074 / LMG 4051 / NBRC 15346 / NCIMB 9279 / VKM B-1422 / R1).